The chain runs to 154 residues: Ascorbate-specific PTS system EIIA component (154 aa).

The PTS EIIA type-2 domain occupies serine 6–threonine 150. Histidine 68 acts as the Tele-phosphohistidine intermediate in catalysis. Histidine 68 carries the phosphohistidine modification.

It localises to the cytoplasm. Functionally, the phosphoenolpyruvate-dependent sugar phosphotransferase system (sugar PTS), a major carbohydrate active transport system, catalyzes the phosphorylation of incoming sugar substrates concomitantly with their translocation across the cell membrane. The enzyme II UlaABC PTS system is involved in ascorbate transport. This Salmonella typhi protein is Ascorbate-specific PTS system EIIA component (ulaC).